The following is a 218-amino-acid chain: Small ribosomal subunit protein uS3c (218 aa).

The 72-residue stretch at 47–118 folds into the KH type-2 domain; sequence VRKHIKSSSN…KLRMALTEVE (72 aa).

This sequence belongs to the universal ribosomal protein uS3 family. In terms of assembly, part of the 30S ribosomal subunit.

The protein localises to the plastid. It localises to the chloroplast. The protein is Small ribosomal subunit protein uS3c (rps3) of Anthoceros angustus (Hornwort).